Here is a 535-residue protein sequence, read N- to C-terminus: Bifunctional purine biosynthesis protein PurH (535 aa).

Positions 6-151 (TRLPVRRALI…KNHKDVAIVV (146 aa)) constitute an MGS-like domain.

It belongs to the PurH family.

The catalysed reaction is (6R)-10-formyltetrahydrofolate + 5-amino-1-(5-phospho-beta-D-ribosyl)imidazole-4-carboxamide = 5-formamido-1-(5-phospho-D-ribosyl)imidazole-4-carboxamide + (6S)-5,6,7,8-tetrahydrofolate. The enzyme catalyses IMP + H2O = 5-formamido-1-(5-phospho-D-ribosyl)imidazole-4-carboxamide. It participates in purine metabolism; IMP biosynthesis via de novo pathway; 5-formamido-1-(5-phospho-D-ribosyl)imidazole-4-carboxamide from 5-amino-1-(5-phospho-D-ribosyl)imidazole-4-carboxamide (10-formyl THF route): step 1/1. It functions in the pathway purine metabolism; IMP biosynthesis via de novo pathway; IMP from 5-formamido-1-(5-phospho-D-ribosyl)imidazole-4-carboxamide: step 1/1. This Azotobacter vinelandii (strain DJ / ATCC BAA-1303) protein is Bifunctional purine biosynthesis protein PurH.